The sequence spans 237 residues: Phosphoribosylaminoimidazole-succinocarboxamide synthase (237 aa).

Belongs to the SAICAR synthetase family.

The catalysed reaction is 5-amino-1-(5-phospho-D-ribosyl)imidazole-4-carboxylate + L-aspartate + ATP = (2S)-2-[5-amino-1-(5-phospho-beta-D-ribosyl)imidazole-4-carboxamido]succinate + ADP + phosphate + 2 H(+). The protein operates within purine metabolism; IMP biosynthesis via de novo pathway; 5-amino-1-(5-phospho-D-ribosyl)imidazole-4-carboxamide from 5-amino-1-(5-phospho-D-ribosyl)imidazole-4-carboxylate: step 1/2. The sequence is that of Phosphoribosylaminoimidazole-succinocarboxamide synthase from Listeria monocytogenes serotype 4b (strain CLIP80459).